The following is a 318-amino-acid chain: DNA-directed RNA polymerase subunit alpha (318 aa).

Residues 1 to 232 are alpha N-terminal domain (alpha-NTD); sequence MAHQRIVGPT…NLFSPLQNVR (232 aa). The segment at 246–318 is alpha C-terminal domain (alpha-CTD); that stretch reads KMTEVLVEEL…HLPKEKFTKD (73 aa).

It belongs to the RNA polymerase alpha chain family. In terms of assembly, in plastids the minimal PEP RNA polymerase catalytic core is composed of four subunits: alpha, beta, beta', and beta''. When a (nuclear-encoded) sigma factor is associated with the core the holoenzyme is formed, which can initiate transcription.

Its subcellular location is the plastid. The protein resides in the chloroplast. It carries out the reaction RNA(n) + a ribonucleoside 5'-triphosphate = RNA(n+1) + diphosphate. DNA-dependent RNA polymerase catalyzes the transcription of DNA into RNA using the four ribonucleoside triphosphates as substrates. In Chlorokybus atmophyticus (Soil alga), this protein is DNA-directed RNA polymerase subunit alpha.